Reading from the N-terminus, the 429-residue chain is MPNPRPAKPMAPSLALGPSPGVLPSWKTAPKGSELLGTRGSGGPFQGRDLRSGAHTSSSLNPLPPSQLQLPTVPLVMVAPSGARLGPSPHLQALLQDRPHFMHQLSTVDAHAQTPVLQVRPLDNPAMISLPPPSAATGVFSLKARPGLPPGINVASLEWVSREPALLCTFPRSGTPRKDSNLLAAPQGSYPLLANGVCKWPGCEKVFEEPEEFLKHCQADHLLDEKGKAQCLLQREVVQSLEQQLELEKEKLGAMQAHLAGKMALAKAPSVASMDKSSCCIVATSTQGSVLPAWSAPREAPDGGLFAVRRHLWGSHGNSSFPEFFHNMDYFKYHNMRPPFTYATLIRWAILEAPERQRTLNEIYHWFTRMFAYFRNHPATWKNAIRHNLSLHKCFVRVESEKGAVWTVDEFEFRKKRSQRPNKCSNPCP.

The segment at 1 to 67 (MPNPRPAKPM…SSLNPLPPSQ (67 aa)) is disordered. Serine 19 bears the Phosphoserine; by CDK2 mark. Position 31 is an N6-acetyllysine (lysine 31). Residues 56–67 (TSSSLNPLPPSQ) are compositionally biased toward low complexity. The Nuclear export signal signature appears at 67–75 (QLQLPTVPL). The LXXLL motif motif lies at 91–95 (LQALL). The interval 105–189 (LSTVDAHAQT…SNLLAAPQGS (85 aa)) is essential for transcriptional repressor activity and for interaction with KAT5 and HDAC7. The interval 148–198 (LPPGINVASLEWVSREPALLCTFPRSGTPRKDSNLLAAPQGSYPLLANGVC) is interaction with IKZF4. Threonine 175 carries the post-translational modification Phosphothreonine; by CDK2. The C2H2-type zinc-finger motif lies at 196-221 (GVCKWPGCEKVFEEPEEFLKHCQADH). The Nuclear export signal signature appears at 238 to 247 (VQSLEQQLEL). Positions 238–259 (VQSLEQQLELEKEKLGAMQAHL) are leucine-zipper. Residues lysine 249 and lysine 251 each participate in a glycyl lysine isopeptide (Lys-Gly) (interchain with G-Cter in ubiquitin) cross-link. Lysine 262 and lysine 267 each carry N6-acetyllysine; alternate. Glycyl lysine isopeptide (Lys-Gly) (interchain with G-Cter in ubiquitin); alternate cross-links involve residues lysine 262 and lysine 267. Residues 277-336 (SSCCIVATSTQGSVLPAWSAPREAPDGGLFAVRRHLWGSHGNSSFPEFFHNMDYFKYHNM) form an interaction with RUNX1 region. Positions 337 to 423 (RPPFTYATLI…RKKRSQRPNK (87 aa)) form a DNA-binding region, fork-head. A Glycyl lysine isopeptide (Lys-Gly) (interchain with G-Cter in ubiquitin) cross-link involves residue lysine 393. Positions 414-417 (RKKR) match the Nuclear localization signal motif. Serine 418 carries the phosphoserine modification. Residues 418–429 (SQRPNKCSNPCP) constitute a propeptide that is removed on maturation.

In terms of assembly, homodimer. Dimerization is essential for its transcriptional regulator activity. Interacts with IKZF3. Interacts (via LXXLL motif) with isoform 4 of RORA (via AF-2 motif). Interacts with STUB1 and HSPA1A/B. Interacts with IKZF4, HDAC7 and KAT5. Interacts with RUNX1, RUNX2, RUNX3 and NFATC2. Interacts with RORC. Interacts with HDAC9 in the absence of T-cell stimulation. Interacts with RELA, PPP1CA, PPP1CB, PPP1CG, HSPA8 and USP7. In terms of processing, acetylation on lysine residues stabilizes FOXP3 and promotes differentiation of T-cells into induced regulatory T-cells (iTregs) associated with suppressive functions. Acetylation is mediated by a coordinated action of KAT5 and EP300/p300 acetyltransferases: EP300/p300 is required to enhance KAT5 autoacetylation, promoting acetylation of FOXP3 by KAT5. Deacetylated by SIRT1. Post-translationally, polyubiquitinated, leading to its proteasomal degradation in regulatory T-cells (Treg) which is mediated by STUB1 in a HSPA1A/B-dependent manner. Deubiquitinated by USP7 and USP44 leading to increase in protein stability. Phosphorylation at Ser-418 regulates its transcriptional repressor activity and consequently, regulatory T-cells (Treg) suppressive function. Phosphorylation by CDK2 negatively regulates its transcriptional activity and protein stability. In terms of processing, undergoes proteolytic cleavage in activated regulatory T-cells (Treg), and can be cleaved at either the N- or C-terminal site, or at both sites. Treg expressing the form cleaved at C-terminal site or both N- and C-terminal sites exhibit an increased induction of IL10 and an increased capacity to suppress proliferation of conventional T-cells in vitro. Treg expressing the form cleaved at only the C-terminal site are highly effective at preventing experimental colitis in an in vivo model of inflammatory bowel disease. As to expression, high level of expression in thymus and spleen.

The protein localises to the nucleus. It localises to the cytoplasm. Its function is as follows. Transcriptional regulator which is crucial for the development and inhibitory function of regulatory T-cells (Treg). Plays an essential role in maintaining homeostasis of the immune system by allowing the acquisition of full suppressive function and stability of the Treg lineage, and by directly modulating the expansion and function of conventional T-cells. Can act either as a transcriptional repressor or a transcriptional activator depending on its interactions with other transcription factors, histone acetylases and deacetylases. The suppressive activity of Treg involves the coordinate activation of many genes, including CTLA4 and TNFRSF18 by FOXP3 along with repression of genes encoding cytokines such as interleukin-2 (IL2) and interferon-gamma (IFNG). Inhibits cytokine production and T-cell effector function by repressing the activity of two key transcription factors, RELA and NFATC2. Mediates transcriptional repression of IL2 via its association with histone acetylase KAT5 and histone deacetylase HDAC7. Can activate the expression of TNFRSF18, IL2RA and CTLA4 and repress the expression of IL2 and IFNG via its association with transcription factor RUNX1. Inhibits the differentiation of IL17 producing helper T-cells (Th17) by antagonizing RORC function, leading to down-regulation of IL17 expression, favoring Treg development. Inhibits the transcriptional activator activity of RORA. Can repress the expression of IL2 and IFNG via its association with transcription factor IKZF4. The protein is Forkhead box protein P3 (Foxp3) of Mus musculus (Mouse).